A 546-amino-acid chain; its full sequence is Probable protein kinase UbiB (546 aa).

The 379-residue stretch at 124–502 folds into the Protein kinase domain; sequence DFEIKPLASA…HVRQGQSRYF (379 aa). ATP-binding positions include 130-138 and Lys153; that span reads LASASIAQV. The active-site Proton acceptor is the Asp288. Helical transmembrane passes span 501 to 521 and 522 to 542; these read YFLG…VSRP and EWGL…FVGW.

Belongs to the ABC1 family. UbiB subfamily.

It localises to the cell inner membrane. It functions in the pathway cofactor biosynthesis; ubiquinone biosynthesis [regulation]. In terms of biological role, is probably a protein kinase regulator of UbiI activity which is involved in aerobic coenzyme Q (ubiquinone) biosynthesis. The polypeptide is Probable protein kinase UbiB (Escherichia coli O127:H6 (strain E2348/69 / EPEC)).